The primary structure comprises 77 residues: Metallothionein-like protein 2B (77 aa).

This sequence belongs to the metallothionein superfamily. Type 15 family. As to expression, expressed in vascular tissues of all organs. Expressed in root and leaf phloem, pollen and root hairs.

In terms of biological role, metallothioneins have a high content of cysteine residues that bind various heavy metals. Functions as a metal chelator of copper (Cu) and zinc (Zn). Functions cooperatively with the phytochelatin synthase PCS1 to protect plants from Cu and cadmium toxicity. Plays a role in Cu homeostasis, specifically in the remobilization of Cu from senescing leaves. The mobilization of Cu from internal sources is important for seed development. In Arabidopsis thaliana (Mouse-ear cress), this protein is Metallothionein-like protein 2B (MT2B).